The sequence spans 124 residues: ATP synthase epsilon chain (124 aa).

It belongs to the ATPase epsilon chain family. As to quaternary structure, F-type ATPases have 2 components, CF(1) - the catalytic core - and CF(0) - the membrane proton channel. CF(1) has five subunits: alpha(3), beta(3), gamma(1), delta(1), epsilon(1). CF(0) has three main subunits: a, b and c.

The protein resides in the cell membrane. Its function is as follows. Produces ATP from ADP in the presence of a proton gradient across the membrane. This chain is ATP synthase epsilon chain, found in Streptomyces avermitilis (strain ATCC 31267 / DSM 46492 / JCM 5070 / NBRC 14893 / NCIMB 12804 / NRRL 8165 / MA-4680).